Here is a 540-residue protein sequence, read N- to C-terminus: Chaperonin GroEL (540 aa).

Residues 29 to 32, 86 to 90, Gly413, 476 to 478, and Asp492 each bind ATP; these read TLGP, DGTTT, and NAA.

It belongs to the chaperonin (HSP60) family. In terms of assembly, forms a cylinder of 14 subunits composed of two heptameric rings stacked back-to-back. Interacts with the co-chaperonin GroES.

The protein localises to the cytoplasm. It catalyses the reaction ATP + H2O + a folded polypeptide = ADP + phosphate + an unfolded polypeptide.. In terms of biological role, together with its co-chaperonin GroES, plays an essential role in assisting protein folding. The GroEL-GroES system forms a nano-cage that allows encapsulation of the non-native substrate proteins and provides a physical environment optimized to promote and accelerate protein folding. The chain is Chaperonin GroEL from Streptococcus sanguinis.